Reading from the N-terminus, the 214-residue chain is ATP-dependent Clp protease proteolytic subunit (214 aa).

Serine 110 serves as the catalytic Nucleophile. Histidine 135 is an active-site residue.

Belongs to the peptidase S14 family. As to quaternary structure, fourteen ClpP subunits assemble into 2 heptameric rings which stack back to back to give a disk-like structure with a central cavity, resembling the structure of eukaryotic proteasomes.

It localises to the cytoplasm. It carries out the reaction Hydrolysis of proteins to small peptides in the presence of ATP and magnesium. alpha-casein is the usual test substrate. In the absence of ATP, only oligopeptides shorter than five residues are hydrolyzed (such as succinyl-Leu-Tyr-|-NHMec, and Leu-Tyr-Leu-|-Tyr-Trp, in which cleavage of the -Tyr-|-Leu- and -Tyr-|-Trp bonds also occurs).. In terms of biological role, cleaves peptides in various proteins in a process that requires ATP hydrolysis. Has a chymotrypsin-like activity. Plays a major role in the degradation of misfolded proteins. The chain is ATP-dependent Clp protease proteolytic subunit from Legionella pneumophila (strain Corby).